Here is a 211-residue protein sequence, read N- to C-terminus: Large ribosomal subunit protein uL3 (211 aa).

Positions 122-147 are disordered; it reads AIKRHGQSRGPMAHGSRYHRRPGSMG.

It belongs to the universal ribosomal protein uL3 family. As to quaternary structure, part of the 50S ribosomal subunit. Forms a cluster with proteins L14 and L19.

Its function is as follows. One of the primary rRNA binding proteins, it binds directly near the 3'-end of the 23S rRNA, where it nucleates assembly of the 50S subunit. The chain is Large ribosomal subunit protein uL3 from Geobacillus sp. (strain WCH70).